Reading from the N-terminus, the 82-residue chain is U1-plectoxin-Pt1a (82 aa).

The N-terminal stretch at 1-20 (MKHLIFSSALVCALVVCTFA) is a signal peptide. The propeptide occupies 21–33 (EEQVNVPFLPDER). 5 cysteine pairs are disulfide-bonded: Cys-37–Cys-51, Cys-44–Cys-57, Cys-50–Cys-68, Cys-54–Cys-77, and Cys-59–Cys-66. The O-palmitoyl serine moiety is linked to residue Ser-79. Residues 80–82 (RRR) constitute a propeptide that is removed on maturation.

The protein belongs to the neurotoxin 02 (plectoxin) family. 02 (plectoxin) subfamily. Plectoxin-5 presumably undergoes post-translational modification to give rise to plectoxin-6. As to expression, expressed by the venom gland.

The protein localises to the secreted. Its function is as follows. Potent toxin that may paralyze and/or kill insect pests such as H.virescens (lepidoptera), S.exigua (beet armyworm) and M.sexta (tobacco hornworm). The chain is U1-plectoxin-Pt1a from Plectreurys tristis (Spider).